A 486-amino-acid polypeptide reads, in one-letter code: F420-non-reducing hydrogenase iron-sulfur subunit A (486 aa).

The Ni(2+) site is built by cysteine 61 and cysteine 64.

Belongs to the [NiFe]/[NiFeSe] hydrogenase large subunit family. In terms of assembly, the F420-non-reducing hydrogenase is composed of three subunits; MvhA, MvhD and MvhG. It forms a complex with the heterodisulfide reductase (Hdr). It depends on Ni(2+) as a cofactor.

The protein resides in the cytoplasm. Its function is as follows. Part of a complex that provides reducing equivalents for heterodisulfide reductase. This is F420-non-reducing hydrogenase iron-sulfur subunit A (mvhA) from Archaeoglobus profundus (strain DSM 5631 / JCM 9629 / NBRC 100127 / Av18).